The primary structure comprises 410 residues: Elongation factor Tu (410 aa).

One can recognise a tr-type G domain in the interval 10–214 (KPHVNIGTIG…EVDAYIPTPE (205 aa)). The interval 19 to 26 (GHVDHGKT) is G1. A GTP-binding site is contributed by 19–26 (GHVDHGKT). Position 26 (Thr-26) interacts with Mg(2+). The interval 60 to 64 (GITIN) is G2. Positions 81–84 (DCPG) are G3. GTP-binding positions include 81–85 (DCPGH) and 136–139 (NKED). The interval 136-139 (NKED) is G4. The G5 stretch occupies residues 174–176 (SAL).

It belongs to the TRAFAC class translation factor GTPase superfamily. Classic translation factor GTPase family. EF-Tu/EF-1A subfamily. Monomer.

It is found in the cytoplasm. It carries out the reaction GTP + H2O = GDP + phosphate + H(+). GTP hydrolase that promotes the GTP-dependent binding of aminoacyl-tRNA to the A-site of ribosomes during protein biosynthesis. The polypeptide is Elongation factor Tu (Gloeothece citriformis (strain PCC 7424) (Cyanothece sp. (strain PCC 7424))).